A 175-amino-acid polypeptide reads, in one-letter code: ATP synthase subunit delta (175 aa).

This sequence belongs to the ATPase delta chain family. F-type ATPases have 2 components, F(1) - the catalytic core - and F(0) - the membrane proton channel. F(1) has five subunits: alpha(3), beta(3), gamma(1), delta(1), epsilon(1). F(0) has three main subunits: a(1), b(2) and c(10-14). The alpha and beta chains form an alternating ring which encloses part of the gamma chain. F(1) is attached to F(0) by a central stalk formed by the gamma and epsilon chains, while a peripheral stalk is formed by the delta and b chains.

Its subcellular location is the cell inner membrane. F(1)F(0) ATP synthase produces ATP from ADP in the presence of a proton or sodium gradient. F-type ATPases consist of two structural domains, F(1) containing the extramembraneous catalytic core and F(0) containing the membrane proton channel, linked together by a central stalk and a peripheral stalk. During catalysis, ATP synthesis in the catalytic domain of F(1) is coupled via a rotary mechanism of the central stalk subunits to proton translocation. Its function is as follows. This protein is part of the stalk that links CF(0) to CF(1). It either transmits conformational changes from CF(0) to CF(1) or is implicated in proton conduction. This chain is ATP synthase subunit delta, found in Xanthomonas oryzae pv. oryzae (strain MAFF 311018).